A 329-amino-acid polypeptide reads, in one-letter code: Biotin synthase (329 aa).

In terms of domain architecture, Radical SAM core spans 46–275; that stretch reads FFGRRLKLVR…LNPKAELRAS (230 aa). 3 residues coordinate [4Fe-4S] cluster: C64, C68, and C71. Positions 108, 140, 200, and 273 each coordinate [2Fe-2S] cluster.

The protein belongs to the radical SAM superfamily. Biotin synthase family. Homodimer. The cofactor is [4Fe-4S] cluster. [2Fe-2S] cluster serves as cofactor.

The enzyme catalyses (4R,5S)-dethiobiotin + (sulfur carrier)-SH + 2 reduced [2Fe-2S]-[ferredoxin] + 2 S-adenosyl-L-methionine = (sulfur carrier)-H + biotin + 2 5'-deoxyadenosine + 2 L-methionine + 2 oxidized [2Fe-2S]-[ferredoxin]. It functions in the pathway cofactor biosynthesis; biotin biosynthesis; biotin from 7,8-diaminononanoate: step 2/2. Functionally, catalyzes the conversion of dethiobiotin (DTB) to biotin by the insertion of a sulfur atom into dethiobiotin via a radical-based mechanism. In Thermus thermophilus (strain ATCC 27634 / DSM 579 / HB8), this protein is Biotin synthase.